The sequence spans 121 residues: Large ribosomal subunit protein uL18 (121 aa).

Belongs to the universal ribosomal protein uL18 family. In terms of assembly, part of the 50S ribosomal subunit; part of the 5S rRNA/L5/L18/L25 subcomplex. Contacts the 5S and 23S rRNAs.

Its function is as follows. This is one of the proteins that bind and probably mediate the attachment of the 5S RNA into the large ribosomal subunit, where it forms part of the central protuberance. This chain is Large ribosomal subunit protein uL18, found in Moorella thermoacetica (strain ATCC 39073 / JCM 9320).